A 212-amino-acid polypeptide reads, in one-letter code: Orotate phosphoribosyltransferase (212 aa).

Residues arginine 97, lysine 101, histidine 103, and 123–131 (DDLISTGGS) each bind 5-phospho-alpha-D-ribose 1-diphosphate. Serine 127 is an orotate binding site.

It belongs to the purine/pyrimidine phosphoribosyltransferase family. PyrE subfamily. As to quaternary structure, homodimer. Mg(2+) is required as a cofactor.

It carries out the reaction orotidine 5'-phosphate + diphosphate = orotate + 5-phospho-alpha-D-ribose 1-diphosphate. Its pathway is pyrimidine metabolism; UMP biosynthesis via de novo pathway; UMP from orotate: step 1/2. Its function is as follows. Catalyzes the transfer of a ribosyl phosphate group from 5-phosphoribose 1-diphosphate to orotate, leading to the formation of orotidine monophosphate (OMP). This Lactiplantibacillus plantarum (strain ATCC BAA-793 / NCIMB 8826 / WCFS1) (Lactobacillus plantarum) protein is Orotate phosphoribosyltransferase.